A 127-amino-acid chain; its full sequence is Fluoride-specific ion channel FluC (127 aa).

4 consecutive transmembrane segments (helical) span residues 7-27, 31-51, 68-88, and 97-117; these read LLVA…GAWV, LGAG…FLIG, LFLA…SYET, and VGKA…LAFL. Residues glycine 76 and threonine 79 each coordinate Na(+).

Belongs to the fluoride channel Fluc/FEX (TC 1.A.43) family.

It is found in the cell inner membrane. The catalysed reaction is fluoride(in) = fluoride(out). Na(+) is not transported, but it plays an essential structural role and its presence is essential for fluoride channel function. Functionally, fluoride-specific ion channel. Important for reducing fluoride concentration in the cell, thus reducing its toxicity. This is Fluoride-specific ion channel FluC from Thermus thermophilus (strain ATCC BAA-163 / DSM 7039 / HB27).